Consider the following 135-residue polypeptide: Nucleoside diphosphate kinase (135 aa).

Residues Lys-9, Phe-57, Arg-85, Thr-91, Arg-102, and Asn-112 each coordinate ATP. Residue His-115 is the Pros-phosphohistidine intermediate of the active site.

The protein belongs to the NDK family. In terms of assembly, homotetramer. Mg(2+) serves as cofactor.

The protein localises to the cytoplasm. It carries out the reaction a 2'-deoxyribonucleoside 5'-diphosphate + ATP = a 2'-deoxyribonucleoside 5'-triphosphate + ADP. The catalysed reaction is a ribonucleoside 5'-diphosphate + ATP = a ribonucleoside 5'-triphosphate + ADP. Its function is as follows. Major role in the synthesis of nucleoside triphosphates other than ATP. The ATP gamma phosphate is transferred to the NDP beta phosphate via a ping-pong mechanism, using a phosphorylated active-site intermediate. The sequence is that of Nucleoside diphosphate kinase from Thermobifida fusca (strain YX).